The sequence spans 138 residues: Protein Turandot B (138 aa).

The N-terminal stretch at 1–21 is a signal peptide; sequence MNFKTSLICFALLLIGTLCSA.

This sequence belongs to the Turandot family.

The protein localises to the secreted. A humoral factor that may play a role in stress tolerance. The chain is Protein Turandot B from Drosophila melanogaster (Fruit fly).